The following is a 267-amino-acid chain: Tryptophan synthase alpha chain (267 aa).

Residues Glu49 and Asp60 each act as proton acceptor in the active site.

It belongs to the TrpA family. As to quaternary structure, tetramer of two alpha and two beta chains.

The enzyme catalyses (1S,2R)-1-C-(indol-3-yl)glycerol 3-phosphate + L-serine = D-glyceraldehyde 3-phosphate + L-tryptophan + H2O. The protein operates within amino-acid biosynthesis; L-tryptophan biosynthesis; L-tryptophan from chorismate: step 5/5. The alpha subunit is responsible for the aldol cleavage of indoleglycerol phosphate to indole and glyceraldehyde 3-phosphate. The chain is Tryptophan synthase alpha chain from Cyanothece sp. (strain PCC 7425 / ATCC 29141).